A 489-amino-acid polypeptide reads, in one-letter code: Beta-1,3-glucosyltransferase (489 aa).

A topological domain (cytoplasmic) is located at residue methionine 1. Residues 2–22 (RPPALLALFSCSAAFALMSEE) traverse the membrane as a helical; Signal-anchor for type II membrane protein segment. Over 23 to 489 (IKEKVTPSQD…ETQKDPREEL (467 aa)) the chain is Lumenal. A glycan (N-linked (GlcNAc...) asparagine) is linked at asparagine 78. The Prevents secretion from ER motif lies at 486–489 (REEL).

The protein belongs to the glycosyltransferase 31 family.

Its subcellular location is the endoplasmic reticulum membrane. Its pathway is protein modification; protein glycosylation. O-glucosyltransferase that transfers glucose toward fucose with a beta-1,3 linkage. Specifically glucosylates O-linked fucosylglycan on TSP type-1 domains of proteins, thereby contributing to elongation of O-fucosylglycan. The chain is Beta-1,3-glucosyltransferase from Mus musculus (Mouse).